A 198-amino-acid polypeptide reads, in one-letter code: UPF0301 protein BDI_1431 (198 aa).

The protein belongs to the UPF0301 (AlgH) family.

In Parabacteroides distasonis (strain ATCC 8503 / DSM 20701 / CIP 104284 / JCM 5825 / NCTC 11152), this protein is UPF0301 protein BDI_1431.